The primary structure comprises 118 residues: U16-barytoxin-Tl1c (118 aa).

The first 16 residues, 1–16, serve as a signal peptide directing secretion; the sequence is MKTIIVFLSFLVLVLA. A propeptide spanning residues 17 to 76 is cleaved from the precursor; sequence TKFGDANEGVNREQTKEVIQNEFRGDFLNEMAAMSLLQQLEAIESALLEKEADRNSRQKR. Cystine bridges form between C77/C92, C84/C97, and C91/C112.

Belongs to the neurotoxin 14 (magi-1) family. 06 (ICK-Trit) subfamily. In terms of tissue distribution, expressed by the venom gland.

It localises to the secreted. Its function is as follows. Ion channel inhibitor. The sequence is that of U16-barytoxin-Tl1c from Trittame loki (Brush-footed trapdoor spider).